The following is a 918-amino-acid chain: Signal transduction histidine-protein kinase BarA (918 aa).

At 1–10 (MTNYSLRARM) the chain is on the cytoplasmic side. Residues 11-31 (MILILAPTVLIGLLLSIFFVV) form a helical membrane-spanning segment. Residues 32-175 (HRYNDLQRQL…LKSVRLQQYK (144 aa)) are Periplasmic-facing. The chain crosses the membrane as a helical span at residues 176 to 196 (EIFISCVMMLFCIGIALIFGW). The Cytoplasmic portion of the chain corresponds to 197-918 (RLMRDVTGPI…VAREASKILG (722 aa)). The HAMP domain maps to 200-252 (RDVTGPIRNMVNTVDRIRRGQLDSRVEGFMLGELDMLKNGINSMAMSLAAYHE). The region spanning 299-520 (NMSHELRTPL…TFWFHINLDL (222 aa)) is the Histidine kinase domain. A Phosphohistidine; by autocatalysis modification is found at histidine 302. Positions 669–785 (TVMAVDDNPA…RLHNLLLRYK (117 aa)) constitute a Response regulatory domain. The residue at position 718 (aspartate 718) is a 4-aspartylphosphate. Residues 822-918 (KTDLARDMLQ…VAREASKILG (97 aa)) form the HPt domain. At histidine 861 the chain carries Phosphohistidine.

Activation requires a sequential transfer of a phosphate group from a His in the primary transmitter domain, to an Asp in the receiver domain and to a His in the secondary transmitter domain.

It localises to the cell inner membrane. The enzyme catalyses ATP + protein L-histidine = ADP + protein N-phospho-L-histidine.. Member of the two-component regulatory system UvrY/BarA involved in the regulation of carbon metabolism via the CsrA/CsrB regulatory system. Phosphorylates UvrY, probably via a four-step phosphorelay. The sequence is that of Signal transduction histidine-protein kinase BarA (barA) from Shigella flexneri.